Consider the following 203-residue polypeptide: dITP/XTP pyrophosphatase (203 aa).

A substrate-binding site is contributed by 8–13; sequence TANKGK. Mg(2+) is bound by residues E41 and D70. D70 (proton acceptor) is an active-site residue. Residues S71, 153 to 156, K176, and 181 to 182 contribute to the substrate site; these read FGYD and HR.

It belongs to the HAM1 NTPase family. As to quaternary structure, homodimer. Mg(2+) is required as a cofactor.

The enzyme catalyses XTP + H2O = XMP + diphosphate + H(+). It carries out the reaction dITP + H2O = dIMP + diphosphate + H(+). The catalysed reaction is ITP + H2O = IMP + diphosphate + H(+). Functionally, pyrophosphatase that catalyzes the hydrolysis of nucleoside triphosphates to their monophosphate derivatives, with a high preference for the non-canonical purine nucleotides XTP (xanthosine triphosphate), dITP (deoxyinosine triphosphate) and ITP. Seems to function as a house-cleaning enzyme that removes non-canonical purine nucleotides from the nucleotide pool, thus preventing their incorporation into DNA/RNA and avoiding chromosomal lesions. In Listeria monocytogenes serovar 1/2a (strain ATCC BAA-679 / EGD-e), this protein is dITP/XTP pyrophosphatase.